The chain runs to 551 residues: Chaperonin GroEL (551 aa).

Residues Thr30–Pro33, Lys51, Asp87–Thr91, Gly415, and Asp496 contribute to the ATP site.

This sequence belongs to the chaperonin (HSP60) family. As to quaternary structure, forms a cylinder of 14 subunits composed of two heptameric rings stacked back-to-back. Interacts with the co-chaperonin GroES.

It localises to the cytoplasm. The enzyme catalyses ATP + H2O + a folded polypeptide = ADP + phosphate + an unfolded polypeptide.. Functionally, together with its co-chaperonin GroES, plays an essential role in assisting protein folding. The GroEL-GroES system forms a nano-cage that allows encapsulation of the non-native substrate proteins and provides a physical environment optimized to promote and accelerate protein folding. The polypeptide is Chaperonin GroEL (Maricaulis maris (strain MCS10) (Caulobacter maris)).